A 325-amino-acid polypeptide reads, in one-letter code: Elongation factor P--(R)-beta-lysine ligase (325 aa).

76–78 contacts substrate; that stretch reads SPE. Residues 100–102 and Asn109 each bind ATP; that span reads RNE. Tyr118 is a binding site for substrate. 244–245 serves as a coordination point for ATP; sequence EL. Glu251 serves as a coordination point for substrate. ATP is bound at residue Gly300.

It belongs to the class-II aminoacyl-tRNA synthetase family. EpmA subfamily. Homodimer.

It carries out the reaction D-beta-lysine + L-lysyl-[protein] + ATP = N(6)-((3R)-3,6-diaminohexanoyl)-L-lysyl-[protein] + AMP + diphosphate + H(+). With EpmB is involved in the beta-lysylation step of the post-translational modification of translation elongation factor P (EF-P). Catalyzes the ATP-dependent activation of (R)-beta-lysine produced by EpmB, forming a lysyl-adenylate, from which the beta-lysyl moiety is then transferred to the epsilon-amino group of a conserved specific lysine residue in EF-P. This Erwinia tasmaniensis (strain DSM 17950 / CFBP 7177 / CIP 109463 / NCPPB 4357 / Et1/99) protein is Elongation factor P--(R)-beta-lysine ligase.